Consider the following 366-residue polypeptide: ATPase ASNA1 homolog (366 aa).

33-40 (KGGVGKTT) is a binding site for ATP. Aspartate 62 is an active-site residue. Glutamate 234 and asparagine 261 together coordinate ATP.

Belongs to the arsA ATPase family. As to quaternary structure, homodimer.

It localises to the cytoplasm. Its subcellular location is the endoplasmic reticulum. Its function is as follows. ATPase required for the post-translational delivery of tail-anchored (TA) proteins to the endoplasmic reticulum. Recognizes and selectively binds the transmembrane domain of TA proteins in the cytosol. This complex then targets to the endoplasmic reticulum by membrane-bound receptors, where the tail-anchored protein is released for insertion. This process is regulated by ATP binding and hydrolysis. ATP binding drives the homodimer towards the closed dimer state, facilitating recognition of newly synthesized TA membrane proteins. ATP hydrolysis is required for insertion. Subsequently, the homodimer reverts towards the open dimer state, lowering its affinity for the membrane-bound receptor, and returning it to the cytosol to initiate a new round of targeting. This Cryptosporidium parvum (strain Iowa II) protein is ATPase ASNA1 homolog.